A 341-amino-acid polypeptide reads, in one-letter code: Fructose-1,6-bisphosphatase, cytosolic (341 aa).

Mg(2+) contacts are provided by Glu71, Glu100, Asp121, Leu123, and Asp124. Residues 124-127 (DGSS), Asn215, Tyr247, Tyr267, and Lys277 each bind substrate. Glu283 is a binding site for Mg(2+).

The protein belongs to the FBPase class 1 family. It depends on Mg(2+) as a cofactor.

It is found in the cytoplasm. The protein resides in the nucleus. It catalyses the reaction beta-D-fructose 1,6-bisphosphate + H2O = beta-D-fructose 6-phosphate + phosphate. In terms of biological role, catalyzes the first irreversible reaction from fructose-1,6-bisphosphate to fructose-6-phosphate and inorganic phosphate and plays an important regulatory role in sucrose biosynthesis and metabolism. Its activity is essential to regulate starch levels. Functions in fructose-mediated signaling independently of its catalytic activity in sugar metabolism. May act downstream of ABA2/GIN1, which is involved in abscisic acid (ABA) synthesis to regulate autotrophic transition and modulate early seedling establishment after seed germination. The chain is Fructose-1,6-bisphosphatase, cytosolic from Arabidopsis thaliana (Mouse-ear cress).